The chain runs to 163 residues: NADH-quinone oxidoreductase subunit I (163 aa).

4Fe-4S ferredoxin-type domains are found at residues 54–84 (LRRY…IESD) and 94–123 (TRYD…ETQI). 8 residues coordinate [4Fe-4S] cluster: Cys64, Cys67, Cys70, Cys74, Cys103, Cys106, Cys109, and Cys113.

The protein belongs to the complex I 23 kDa subunit family. As to quaternary structure, NDH-1 is composed of 14 different subunits. Subunits NuoA, H, J, K, L, M, N constitute the membrane sector of the complex. The cofactor is [4Fe-4S] cluster.

Its subcellular location is the cell inner membrane. The catalysed reaction is a quinone + NADH + 5 H(+)(in) = a quinol + NAD(+) + 4 H(+)(out). Its function is as follows. NDH-1 shuttles electrons from NADH, via FMN and iron-sulfur (Fe-S) centers, to quinones in the respiratory chain. The immediate electron acceptor for the enzyme in this species is believed to be ubiquinone. Couples the redox reaction to proton translocation (for every two electrons transferred, four hydrogen ions are translocated across the cytoplasmic membrane), and thus conserves the redox energy in a proton gradient. This Cupriavidus necator (strain ATCC 17699 / DSM 428 / KCTC 22496 / NCIMB 10442 / H16 / Stanier 337) (Ralstonia eutropha) protein is NADH-quinone oxidoreductase subunit I.